We begin with the raw amino-acid sequence, 971 residues long: Reversion-inducing cysteine-rich protein with Kazal motifs (971 aa).

The first 22 residues, 1–22 (MASVRASPRSALLLLLAAAGVA), serve as a signal peptide directing secretion. The Knot 1 repeat unit spans residues 37–84 (CCNHSKDNQMCRDVCEQIFSSKSESRLKHLLQRAPDYCPETMVEIWSC). Residues 37–338 (CCNHSKDNQM…NPVEVSMLTC (302 aa)) are 5 X Knot repeats. N-linked (GlcNAc...) asparagine glycosylation is found at Asn-39 and Asn-86. Knot repeat units follow at residues 104–141 (CCELAIGLECRQACKQASSKNDISKVCRKEYENALFSC) and 151–197 (CCSY…LIHC). Asn-200 is a glycosylation site (N-linked (GlcNAc...) asparagine). 2 Knot repeats span residues 216 to 263 (CCDR…LWQC) and 292 to 338 (CCSK…MLTC). Asn-297 and Asn-352 each carry an N-linked (GlcNAc...) asparagine glycan. Kazal-like domains lie at 627–673 (TFTG…PCIS), 698–752 (TFDK…PCQP), and 753–789 (FCRAKEPVCGHNGETYSSVCAAYSDRVAVDYYGPCQA). Intrachain disulfides connect Cys-633/Cys-658, Cys-635/Cys-654, Cys-643/Cys-671, Cys-716/Cys-735, Cys-724/Cys-750, and Cys-761/Cys-787. A Kazal-like 2; degenerate domain is found at 704–750 (CSQYECVPRQLTCDQARDPVCDTDHMEHSNLCTLYQRGKSLSYRGPC). Ser-942 is lipidated: GPI-anchor amidated serine. Residues 943–971 (SAVVGRPLFHSLLLLLSLGLTVHLLWTRP) constitute a propeptide, removed in mature form.

It belongs to the RECK family. As to quaternary structure, interacts (via knot repeats) with WNT7A (via disordered linker region); the interaction is direct. Interacts (via knot repeats) with WNT7B (via disordered linker region); the interaction is direct. Interacts with ADGRA2; the interaction is direct. Interacts with MMP9.

The protein localises to the cell membrane. In terms of biological role, functions together with ADGRA2 to enable brain endothelial cells to selectively respond to Wnt7 signals (WNT7A or WNT7B). Plays a key role in Wnt7-specific responses: required for central nervous system (CNS) angiogenesis and blood-brain barrier regulation. Acts as a Wnt7-specific coactivator of canonical Wnt signaling by decoding Wnt ligands: acts by interacting specifically with the disordered linker region of Wnt7, thereby conferring ligand selectivity for Wnt7. ADGRA2 is then required to deliver RECK-bound Wnt7 to frizzled by assembling a higher-order RECK-ADGRA2-Fzd-LRP5-LRP6 complex. Also acts as a serine protease inhibitor: negatively regulates matrix metalloproteinase-9 (MMP9) by suppressing MMP9 secretion and by direct inhibition of its enzymatic activity. Also inhibits metalloproteinase activity of MMP2 and MMP14 (MT1-MMP). This is Reversion-inducing cysteine-rich protein with Kazal motifs from Mus musculus (Mouse).